A 356-amino-acid chain; its full sequence is Glutamine synthetase cytosolic isozyme 1-1 (356 aa).

A GS beta-grasp domain is found at 19-99 (IIAEYIWIGG…VMCDCYTPAG (81 aa)). The GS catalytic domain occupies 106 to 356 (KRHNAAKIFS…IAETTIIWKP (251 aa)).

Belongs to the glutamine synthetase family. Homooctamer. Highly expressed in leaf blades, at intermediate levels in spikelets (rice flower) and at lower levels in roots.

It is found in the cytoplasm. It carries out the reaction L-glutamate + NH4(+) + ATP = L-glutamine + ADP + phosphate + H(+). Its function is as follows. High-affinity glutamine synthetase involved in ammonium assimilation. Seems to be a major component of the cytosolic glutamine synthetic pathway in leaf blades. Plays an important role in maintaining carbon and nitrogen metabolic balance during ammonium assimilation in shoots and roots, thus controlling plant growth and development. Plays an important role in maintaining broad range of metabolites and transcripts involved in the maintenance of plant metabolic homeostasis and development of plastid in roots. This chain is Glutamine synthetase cytosolic isozyme 1-1, found in Oryza sativa subsp. japonica (Rice).